Here is a 267-residue protein sequence, read N- to C-terminus: Undecaprenyl-diphosphatase (267 aa).

The next 8 helical transmembrane spans lie at 1–21 (MTYF…FLPI), 39–59 (QGLA…VIYF), 83–103 (SNLA…GLLF), 111–131 (LRSA…LWWV), 149–169 (ALFL…RSGI), 189–209 (FLMS…KLAM), 218–238 (LLST…HFFL), and 246–266 (MMPF…WLAL).

Belongs to the UppP family.

Its subcellular location is the cell inner membrane. The enzyme catalyses di-trans,octa-cis-undecaprenyl diphosphate + H2O = di-trans,octa-cis-undecaprenyl phosphate + phosphate + H(+). In terms of biological role, catalyzes the dephosphorylation of undecaprenyl diphosphate (UPP). Confers resistance to bacitracin. The chain is Undecaprenyl-diphosphatase from Aliivibrio fischeri (strain ATCC 700601 / ES114) (Vibrio fischeri).